The primary structure comprises 763 residues: Phosphoglycerol transferase I (763 aa).

4 helical membrane passes run 1–21 (MSELLSVALFLASVLIYAWKA), 26–46 (WWFAATLTVLGLFVILNITLY), 77–97 (ILPGIGIALALVAVFGALGWI), and 108–128 (VGYSLLALLLALGSVDASPAF).

Belongs to the OpgB family.

The protein resides in the cell inner membrane. It catalyses the reaction a phosphatidylglycerol + a membrane-derived-oligosaccharide D-glucose = a 1,2-diacyl-sn-glycerol + a membrane-derived-oligosaccharide 6-(glycerophospho)-D-glucose.. Its pathway is glycan metabolism; osmoregulated periplasmic glucan (OPG) biosynthesis. In terms of biological role, transfers a phosphoglycerol residue from phosphatidylglycerol to the membrane-bound nascent glucan backbones. In Salmonella agona (strain SL483), this protein is Phosphoglycerol transferase I.